We begin with the raw amino-acid sequence, 318 residues long: MVGYDAKADARSNSKLEVAVAGSVSGFVTRALISPLDVIKIRFQLQLERVCPSDPNAKYHGILQAAKQILQEEGPRAFWKGHVPAQILSIGYGAVQFLAFEELTELLYQANLYQTHQFSAHFVCGGLSAGTATLTVHPVDVLRTRLAAQGEPKIYSNLREAIRTMYRTEGPFVFYKGLTPTVIAIFPYAGLQFSCYRSLKRAYDWIMPPDGKQTGNLKNLLCGCGSGVISKTLTYPLDLFKKRLQVRGFEHARSAFGQVRSYRGLLDLAQQVLQHEGTRGFFKGLSPSLMKAALSTGFMFFWYELFCNLFHCIRREDR.

3 Solcar repeats span residues 13-106 (NSKL…LTEL), 116-202 (HQFS…LKRA), and 214-309 (TGNL…FCNL). Helical transmembrane passes span 19 to 39 (AVAGSVSGFVTRALISPLDVI), 87 to 107 (ILSIGYGAVQFLAFEELTELL), 122 to 142 (FVCGGLSAGTATLTVHPVDVL), 173 to 193 (VFYKGLTPTVIAIFPYAGLQF), 220 to 240 (LLCGCGSGVISKTLTYPLDLF), and 293 to 313 (ALSTGFMFFWYELFCNLFHCI).

It belongs to the mitochondrial carrier (TC 2.A.29) family.

It is found in the mitochondrion membrane. The catalysed reaction is thiamine phosphate(out) + thiamine diphosphate(in) = thiamine phosphate(in) + thiamine diphosphate(out). Its function is as follows. Mitochondrial transporter mediating uptake of thiamine diphosphate into mitochondria. It is not clear if the antiporter activity is affected by the membrane potential or by the proton electrochemical gradient. This Rattus norvegicus (Rat) protein is Mitochondrial thiamine pyrophosphate carrier (Slc25a19).